The primary structure comprises 115 residues: NADH-ubiquinone oxidoreductase chain 3 (115 aa).

The next 3 helical transmembrane spans lie at 3–23 (LVIA…VAFW), 55–75 (FFLV…LLPI), and 87–107 (LLSL…YEWL).

It belongs to the complex I subunit 3 family. Core subunit of respiratory chain NADH dehydrogenase (Complex I) which is composed of 45 different subunits. Interacts with TMEM186. Interacts with TMEM242.

The protein resides in the mitochondrion inner membrane. It catalyses the reaction a ubiquinone + NADH + 5 H(+)(in) = a ubiquinol + NAD(+) + 4 H(+)(out). Functionally, core subunit of the mitochondrial membrane respiratory chain NADH dehydrogenase (Complex I) which catalyzes electron transfer from NADH through the respiratory chain, using ubiquinone as an electron acceptor. Essential for the catalytic activity of complex I. In Ornithorhynchus anatinus (Duckbill platypus), this protein is NADH-ubiquinone oxidoreductase chain 3.